Here is a 306-residue protein sequence, read N- to C-terminus: Curved DNA-binding protein (306 aa).

The J domain maps to 5–69 (DYYAIMGVKP…QRRAEYDQMW (65 aa)).

It localises to the cytoplasm. The protein resides in the nucleoid. Its function is as follows. DNA-binding protein that preferentially recognizes a curved DNA sequence. It is probably a functional analog of DnaJ; displays overlapping activities with DnaJ, but functions under different conditions, probably acting as a molecular chaperone in an adaptive response to environmental stresses other than heat shock. Lacks autonomous chaperone activity; binds native substrates and targets them for recognition by DnaK. Its activity is inhibited by the binding of CbpM. The sequence is that of Curved DNA-binding protein from Shigella dysenteriae serotype 1 (strain Sd197).